A 260-amino-acid chain; its full sequence is MTSLKLLKKKAPLVICITNDVVKNFTANGLVALGASPAMSEFPADLEDLLKYAGGLLINIGTLTDENWKLYQAALKIAEKYNVPAVLDPVACGAGEYRKKVADDLINNYKLAAIRGNAGEIASLVGIDVASKGVDSAGVDNIDEIALAANEKFNIPIVVTGEVDAIAVNGEVVTIHNGSAMMPKVIGTGCLLGAVVASFIGLEKGQELKSLETAMLVYNIAGEMAEKRPNGHLPGTFKVEFINALYEITDEDVKEFKRVK.

Substrate is bound at residue Met-39. ATP is bound by residues Arg-115 and Thr-160. Gly-187 serves as a coordination point for substrate.

This sequence belongs to the Thz kinase family. Mg(2+) serves as cofactor.

The enzyme catalyses 5-(2-hydroxyethyl)-4-methylthiazole + ATP = 4-methyl-5-(2-phosphooxyethyl)-thiazole + ADP + H(+). Its pathway is cofactor biosynthesis; thiamine diphosphate biosynthesis; 4-methyl-5-(2-phosphoethyl)-thiazole from 5-(2-hydroxyethyl)-4-methylthiazole: step 1/1. In terms of biological role, catalyzes the phosphorylation of the hydroxyl group of 4-methyl-5-beta-hydroxyethylthiazole (THZ). The polypeptide is Hydroxyethylthiazole kinase 1 (Streptococcus pneumoniae serotype 19F (strain G54)).